A 182-amino-acid chain; its full sequence is Hypoxanthine/guanine phosphoribosyltransferase (182 aa).

It belongs to the purine/pyrimidine phosphoribosyltransferase family. Archaeal HPRT subfamily. In terms of assembly, homodimer.

It localises to the cytoplasm. The catalysed reaction is IMP + diphosphate = hypoxanthine + 5-phospho-alpha-D-ribose 1-diphosphate. The enzyme catalyses GMP + diphosphate = guanine + 5-phospho-alpha-D-ribose 1-diphosphate. Its pathway is purine metabolism; IMP biosynthesis via salvage pathway; IMP from hypoxanthine: step 1/1. Its function is as follows. Catalyzes a salvage reaction resulting in the formation of IMP that is energically less costly than de novo synthesis. The chain is Hypoxanthine/guanine phosphoribosyltransferase from Methanospirillum hungatei JF-1 (strain ATCC 27890 / DSM 864 / NBRC 100397 / JF-1).